Consider the following 217-residue polypeptide: Probable transaldolase (217 aa).

Lys83 functions as the Schiff-base intermediate with substrate in the catalytic mechanism.

This sequence belongs to the transaldolase family. Type 3B subfamily.

Its subcellular location is the cytoplasm. It carries out the reaction D-sedoheptulose 7-phosphate + D-glyceraldehyde 3-phosphate = D-erythrose 4-phosphate + beta-D-fructose 6-phosphate. The protein operates within carbohydrate degradation; pentose phosphate pathway; D-glyceraldehyde 3-phosphate and beta-D-fructose 6-phosphate from D-ribose 5-phosphate and D-xylulose 5-phosphate (non-oxidative stage): step 2/3. Functionally, transaldolase is important for the balance of metabolites in the pentose-phosphate pathway. The chain is Probable transaldolase from Ruegeria pomeroyi (strain ATCC 700808 / DSM 15171 / DSS-3) (Silicibacter pomeroyi).